We begin with the raw amino-acid sequence, 959 residues long: Translation initiation factor IF-2 (959 aa).

A compositionally biased stretch (basic and acidic residues) spans 1 to 10 (MSDKTNDDKT). The disordered stretch occupies residues 1–374 (MSDKTNDDKT…SQMQETREKI (374 aa)). The span at 27–37 (EQSTVRQNFSH) shows a compositional bias: polar residues. 2 stretches are compositionally biased toward low complexity: residues 63 to 118 (AAAA…VTKP) and 128 to 138 (QRPGGQQAQRP). Basic and acidic residues-rich tracts occupy residues 154 to 225 (SEMD…EAAK) and 232 to 241 (ARSERRDDAR). The segment covering 246–284 (GARPQQAGRPQGGRPQPAGRPQQGSPRPAPIIADAAPIA) has biased composition (low complexity). Over residues 318 to 333 (PEVRAPKVVKGEDDRR) the composition is skewed to basic and acidic residues. Residues 457 to 626 (SRPPVVTIMG…LLQAEMLDLK (170 aa)) enclose the tr-type G domain. Positions 466–473 (GHVDHGKT) are G1. A GTP-binding site is contributed by 466 to 473 (GHVDHGKT). The tract at residues 491–495 (GITQH) is G2. The segment at 512-515 (DTPG) is G3. GTP is bound by residues 512–516 (DTPGH) and 566–569 (NKID). The G4 stretch occupies residues 566 to 569 (NKID). The tract at residues 602–604 (SAK) is G5.

This sequence belongs to the TRAFAC class translation factor GTPase superfamily. Classic translation factor GTPase family. IF-2 subfamily.

It is found in the cytoplasm. Its function is as follows. One of the essential components for the initiation of protein synthesis. Protects formylmethionyl-tRNA from spontaneous hydrolysis and promotes its binding to the 30S ribosomal subunits. Also involved in the hydrolysis of GTP during the formation of the 70S ribosomal complex. This Brucella canis (strain ATCC 23365 / NCTC 10854 / RM-666) protein is Translation initiation factor IF-2.